A 163-amino-acid polypeptide reads, in one-letter code: MAATPLPPLRLAIACDDAGVSYKEALKAHLSDNPLVSSITDVGVTSTTDKTAYPHVAIQAAQLIKDGKVDRALMICGTGLGVAISANKVPGIRAVTAHDTFSVERAILSNDAQVLCFGQRVIGIELAKRLAGEWLTYRFDQKSASAQKVQAISDYEKKFVEVN.

A D-ribulose 5-phosphate-binding site is contributed by aspartate 16–aspartate 17. Cysteine 76 functions as the Proton acceptor in the catalytic mechanism. D-ribulose 5-phosphate contacts are provided by residues glycine 77–glycine 81, asparagine 110, arginine 120, and lysine 148.

It belongs to the LacAB/RpiB family. As to quaternary structure, homodimer or homotetramer.

The chain is Putative ribose 5-phosphate isomerase from Coccidioides immitis (strain RS) (Valley fever fungus).